Consider the following 626-residue polypeptide: Serine/threonine-protein kinase PknH (626 aa).

The Cytoplasmic portion of the chain corresponds to 1–403; it reads MSDAQDSRVG…QTPRKTNPWP (403 aa). The Protein kinase domain occupies 16–276; that stretch reads YHLKRLLGRG…DLALAAHEAL (261 aa). ATP contacts are provided by residues 22–30 and lysine 45; that span reads LGRGGMGEV. The active-site Proton acceptor is the aspartate 139. Threonine 170 is subject to Phosphothreonine. Residues 292 to 396 are disordered; that stretch reads QESTLPAPPK…GGPSPWAQTP (105 aa). Composition is skewed to pro residues over residues 297–308 and 316–342; these read PAPPKPVPPPTM and RQPP…PAQP. Residues 343–355 are compositionally biased toward low complexity; the sequence is GPAGQRPGPTGQP. Residues 404-424 traverse the membrane as a helical segment; the sequence is LVAGAAAVVLVLVLGAIGIWI. The Extracellular segment spans residues 425 to 626; it reads AIRPKPVQPP…AKIVDKVNKE (202 aa). Intrachain disulfides connect cysteine 482/cysteine 545 and cysteine 587/cysteine 604.

The protein belongs to the protein kinase superfamily. Ser/Thr protein kinase family. Requires a divalent metal cation as cofactor. Post-translationally, autophosphorylated on threonine and serine residues. Dephosphorylated by PstP.

Its subcellular location is the cell membrane. It catalyses the reaction L-seryl-[protein] + ATP = O-phospho-L-seryl-[protein] + ADP + H(+). The enzyme catalyses L-threonyl-[protein] + ATP = O-phospho-L-threonyl-[protein] + ADP + H(+). In terms of biological role, may regulate bacterial growth in response to external signals to facilitate adaptation to the host environment. This Mycobacterium tuberculosis (strain CDC 1551 / Oshkosh) protein is Serine/threonine-protein kinase PknH (pknH).